Here is a 79-residue protein sequence, read N- to C-terminus: Small ribosomal subunit protein bS18 (79 aa).

Belongs to the bacterial ribosomal protein bS18 family. As to quaternary structure, part of the 30S ribosomal subunit. Forms a tight heterodimer with protein bS6.

In terms of biological role, binds as a heterodimer with protein bS6 to the central domain of the 16S rRNA, where it helps stabilize the platform of the 30S subunit. This is Small ribosomal subunit protein bS18 (rpsR) from Bacillus subtilis (strain 168).